A 360-amino-acid polypeptide reads, in one-letter code: Capsular polysaccharide phosphotransferase LcbA (360 aa).

The protein belongs to the stealth family.

In terms of biological role, part of a group II capsule biosynthesis locus. This is Capsular polysaccharide phosphotransferase LcbA (lcbA) from Aeromonas hydrophila.